A 715-amino-acid chain; its full sequence is Methylcrotonoyl-CoA carboxylase subunit alpha, mitochondrial (715 aa).

The N-terminal 38 residues, 1–38, are a transit peptide targeting the mitochondrion; sequence MAAAALLAAVDRNQLRRVPILLLQPREWPWKHRTVKYG. A Biotin carboxylation domain is found at 45–490; the sequence is ITKVLIANRG…HTDFIPQHHK (446 aa). An ATP-binding site is contributed by Lys159. One can recognise an ATP-grasp domain in the interval 163 to 360; sequence KSIMAAAGVP…LVEWQLRIAA (198 aa). Residue Lys193 is modified to N6-acetyllysine. ATP is bound by residues Lys201 and 207–208; that span reads GG. N6-acetyllysine is present on Lys233. ATP is bound by residues His251, His278, and Glu318. The active site involves Arg335. Lys490 is subject to N6-acetyllysine. Lys577 bears the N6-acetyllysine; alternate mark. Residue Lys577 is modified to N6-succinyllysine; alternate. The Biotinyl-binding domain occupies 622–711; sequence SIEVGIPVPK…NRHAPLVEFE (90 aa). An N6-biotinyllysine modification is found at Lys677.

As to quaternary structure, probably a dodecamer composed of six biotin-containing alpha subunits (MCCC1) and six beta (MCCC2) subunits. Interacts (via the biotin carboxylation domain) with SIRT4. Biotin serves as cofactor. Post-translationally, acetylated.

Its subcellular location is the mitochondrion matrix. It catalyses the reaction 3-methylbut-2-enoyl-CoA + hydrogencarbonate + ATP = 3-methyl-(2E)-glutaconyl-CoA + ADP + phosphate + H(+). Its pathway is amino-acid degradation; L-leucine degradation; (S)-3-hydroxy-3-methylglutaryl-CoA from 3-isovaleryl-CoA: step 2/3. Functionally, biotin-attachment subunit of the 3-methylcrotonyl-CoA carboxylase, an enzyme that catalyzes the conversion of 3-methylcrotonyl-CoA to 3-methylglutaconyl-CoA, a critical step for leucine and isovaleric acid catabolism. In Rattus norvegicus (Rat), this protein is Methylcrotonoyl-CoA carboxylase subunit alpha, mitochondrial.